We begin with the raw amino-acid sequence, 513 residues long: Histone acetyltransferase KAT5 (513 aa).

The region spanning 8-65 is the Tudor-knot domain; sequence IEGCRLPVLRRNQDNEDEWPLAEILSVKDISGRKLFYVHYIDFNKRLDEWVTHERLDL. Position 52 is an N6-acetyllysine (Lys52). Positions 69 to 106 are disordered; the sequence is QFPKKEAKTPTKNGLPGSRPGSPEREVPASAQASGKTL. The residue at position 86 (Ser86) is a Phosphoserine; by GSK3. Ser90 carries the phosphoserine; by CDK1 and CDK9 modification. N6-acetyllysine; by autocatalysis occurs at positions 104 and 120. A disordered region spans residues 122–220; sequence REAIPGGEPD…RMTGSLVSDR (99 aa). Residues 133 to 144 are compositionally biased toward polar residues; the sequence is PLSSSSCLQPNH. Lys148, Lys150, Lys187, and Lys189 each carry N6-acetyllysine; by autocatalysis. Residue Ser199 is modified to Phosphoserine. One can recognise an MYST-type HAT domain in the interval 227 to 504; that stretch reads TRMKNIECIE…IDSKCLHFTP (278 aa). The C2HC MYST-type zinc finger occupies 260 to 285; it reads LYLCEFCLKYGRSLKCLQRHLTKCDL. Lys327 is modified (N6-acetyllysine; by autocatalysis). An interaction with ATF2 region spans residues 368-513; it reads ACILTLPPYQ…PKDWSKRGKW (146 aa). Acetyl-CoA is bound by residues 370-372 and 377-383; these read ILT and QRRGYGK. The active-site Proton donor/acceptor is Glu403. Acetyl-CoA-binding residues include Ser407 and Ser416. Residue Lys430 forms a Glycyl lysine isopeptide (Lys-Gly) (interchain with G-Cter in SUMO1); alternate linkage. Residue Lys430 forms a Glycyl lysine isopeptide (Lys-Gly) (interchain with G-Cter in SUMO2); alternate linkage. Lys451 is covalently cross-linked (Glycyl lysine isopeptide (Lys-Gly) (interchain with G-Cter in SUMO1)).

This sequence belongs to the MYST (SAS/MOZ) family. In terms of assembly, component of the NuA4 histone acetyltransferase complex which contains the catalytic subunit KAT5/TIP60 and the subunits EP400, TRRAP/PAF400, BRD8/SMAP, EPC1, DMAP1/DNMAP1, RUVBL1/TIP49, RUVBL2, ING3, actin, ACTL6A/BAF53A, MORF4L1/MRG15, MORF4L2/MRGX, MRGBP, YEATS4/GAS41, VPS72/YL1 and MEAF6. KAT5/TIP60, EPC1, and ING3 together constitute a minimal HAT complex termed Piccolo NuA4. The NuA4 complex interacts with MYC. Interacts with ATM. Interacts with JADE1. Interacts with PLA2G4A/CPLA2, EDNRA and HDAC7. Interacts with the cytoplasmic tail of APP and APBB1/FE65. Interacts with TRIM24 and TRIM68. Forms a complex with SENP6 and UBE2I in response to UV irradiation. Identified in a complex with HINT1. Interacts with ATF2 and CUL3. Interacts with NR1D2 (via N-terminus). Component of a SWR1-like complex. Interacts with FOXP3. Interacts with ZBTB49. Interacts with SRF. Interacts with ATF3; promoting autoacetylation and deubiquitination by USP7. Interacts with EP300/p300; interaction promotes KAT5 autoacetylation. Interacts with PRKDC; interaction is impaired following KAT5 sumoylation. Interacts with GPR50. Interacts with NME3; this interaction enables recruitment of NME3 at DNA damage sites where it plays a role in the repair of DNA. (Microbial infection) Interacts with HIV-1 TAT. In terms of processing, phosphorylated on Ser-86 and Ser-90; enhanced during G2/M phase. The phosphorylated form has a higher activity. Phosphorylation at Ser-90 by CDK1 or CDK9 is a prerequisite for phosphorylation at Ser-86 by GSK3. Phosphorylation at Ser-86 by GSK3 (GSK3A or GSK3B) activates acetyltransferase and acyltransferase activities. Phosphorylation at Ser-90 by CDK9 promotes KAT5 recruitment to chromatin. Phosphorylation by VRK1 following DNA damage promotes KAT5 association with chromatin and histone acetyltransferase activity. Post-translationally, autoacetylated. Autoacetylation is required for histone acetyltransferase activity. Autoacetylation at Lys-327 is facilitated by interaction with EP300/p300: it prevents ubiquitination and subsequent degradation by the proteasome and promotes acetylation of target proteins. Deacetylated by HDAC3 and SIRT1. Deacetylation by HDAC3 promotes its ubiquitination and cytoplasmic localization. Sumoylated by UBE2I at Lys-430 and Lys-451, leading to increase of its histone acetyltransferase activity in UV-induced DNA damage response, as well as its translocation to nuclear bodies. Sumoylation with SUMO2 by PIAS4 at Lys-430 promotes repair of DNA double-strand breaks (DSBs) via homologous recombination (HR). Sumoylation by PIAS4 impairs interaction with PRKDC, inhibiting non-homologous end joining (NHEJ)-mediated repair of DSBs, thereby facilitating HR. Desumoylated by SENP3. In terms of processing, ubiquitinated by MDM2, leading to its proteasome-dependent degradation. Ubiquitination is prevented by autoacetylation at Lys-327. Ubiquitinated following deacetylation by HDAC3, leading to cytoplasmic localization. Deubiquitinated by USP7 following interaction with ATF3, promoting its stabilization. Post-translationally, (Microbial infection) In case of HIV-1 infection, interaction with the viral Tat protein leads to KAT5 polyubiquitination and targets it to degradation.

The protein localises to the nucleus. It is found in the chromosome. It localises to the cytoplasm. The protein resides in the centromere. Its subcellular location is the kinetochore. The protein localises to the cytoskeleton. It is found in the spindle pole. It localises to the nucleolus. The protein resides in the perinuclear region. The enzyme catalyses L-lysyl-[histone] + acetyl-CoA = N(6)-acetyl-L-lysyl-[histone] + CoA + H(+). It carries out the reaction L-lysyl-[protein] + acetyl-CoA = N(6)-acetyl-L-lysyl-[protein] + CoA + H(+). It catalyses the reaction (2E)-butenoyl-CoA + L-lysyl-[protein] = N(6)-(2E)-butenoyl-L-lysyl-[protein] + CoA + H(+). The catalysed reaction is 2-hydroxyisobutanoyl-CoA + L-lysyl-[protein] = N(6)-(2-hydroxyisobutanoyl)-L-lysyl-[protein] + CoA + H(+). The enzyme catalyses (S)-lactoyl-CoA + L-lysyl-[protein] = N(6)-[(S)-lactoyl]-L-lysyl-[protein] + CoA + H(+). Acyltransferase and acetyltransferase activities are activated by phosphorylation and autoacetylation. Autoacetylation activates the histone acetyltransferase activity. Functionally, catalytic subunit of the NuA4 histone acetyltransferase complex, a multiprotein complex involved in transcriptional activation of select genes principally by acetylation of nucleosomal histones H2A and H4. Histone acetylation alters nucleosome-DNA interactions and promotes interaction of the modified histones with other proteins which positively regulate transcription. The NuA4 histone acetyltransferase complex is required for the activation of transcriptional programs associated with proto-oncogene mediated growth induction, tumor suppressor mediated growth arrest and replicative senescence, apoptosis, and DNA repair. The NuA4 complex plays a direct role in repair of DNA double-strand breaks (DSBs) by promoting homologous recombination (HR): the complex inhibits TP53BP1 binding to chromatin via MBTD1, which recognizes and binds histone H4 trimethylated at 'Lys-20' (H4K20me), and KAT5 that catalyzes acetylation of 'Lys-15' of histone H2A (H2AK15ac), thereby blocking the ubiquitination mark required for TP53BP1 localization at DNA breaks. Also involved in DSB repair by mediating acetylation of 'Lys-5' of histone H2AX (H2AXK5ac), promoting NBN/NBS1 assembly at the sites of DNA damage. The NuA4 complex plays a key role in hematopoietic stem cell maintenance and is required to maintain acetylated H2A.Z/H2AZ1 at MYC target genes. The NuA4 complex is also required for spermatid development by promoting acetylation of histones: histone hyperacetylation is required for histone replacement during the transition from round to elongating spermatids. Component of a SWR1-like complex that specifically mediates the removal of histone H2A.Z/H2AZ1 from the nucleosome. Also acetylates non-histone proteins, such as BMAL1, ATM, AURKB, CHKA, CGAS, ERCC4/XPF, LPIN1, TP53/p53, NDC80/HEC1, NR1D2, RAN, SOX4, FOXP3, SQSTM1, ULK1 and RUBCNL/Pacer. Directly acetylates and activates ATM. Promotes nucleotide excision repair (NER) by mediating acetylation of ERCC4/XPF, thereby promoting formation of the ERCC4-ERCC1 complex. Relieves NR1D2-mediated inhibition of APOC3 expression by acetylating NR1D2. Acts as a regulator of regulatory T-cells (Treg) by catalyzing FOXP3 acetylation, thereby promoting FOXP3 transcriptional repressor activity. Involved in skeletal myoblast differentiation by mediating acetylation of SOX4. Catalyzes acetylation of APBB1/FE65, increasing its transcription activator activity. Promotes transcription elongation during the activation phase of the circadian cycle by catalyzing acetylation of BMAL1, promoting elongation of circadian transcripts. Together with GSK3 (GSK3A or GSK3B), acts as a regulator of autophagy: phosphorylated at Ser-86 by GSK3 under starvation conditions, leading to activate acetyltransferase activity and promote acetylation of key autophagy regulators, such as ULK1 and RUBCNL/Pacer. Acts as a regulator of the cGAS-STING innate antiviral response by catalyzing acetylation the N-terminus of CGAS, thereby promoting CGAS DNA-binding and activation. Also regulates lipid metabolism by mediating acetylation of CHKA or LPIN1. Promotes lipolysis of lipid droplets following glucose deprivation by mediating acetylation of isoform 1 of CHKA, thereby promoting monomerization of CHKA and its conversion into a tyrosine-protein kinase. Acts as a regulator of fatty-acid-induced triacylglycerol synthesis by catalyzing acetylation of LPIN1, thereby promoting the synthesis of diacylglycerol. In addition to protein acetyltransferase, can use different acyl-CoA substrates, such as (2E)-butenoyl-CoA (crotonyl-CoA), S-lactoyl-CoA (lactyl-CoA) and 2-hydroxyisobutanoyl-CoA (2-hydroxyisobutyryl-CoA), and is able to mediate protein crotonylation, lactylation and 2-hydroxyisobutyrylation, respectively. Acts as a key regulator of chromosome segregation and kinetochore-microtubule attachment during mitosis by mediating acetylation or crotonylation of target proteins. Catalyzes acetylation of AURKB at kinetochores, increasing AURKB activity and promoting accurate chromosome segregation in mitosis. Acetylates RAN during mitosis, promoting microtubule assembly at mitotic chromosomes. Acetylates NDC80/HEC1 during mitosis, promoting robust kinetochore-microtubule attachment. Catalyzes crotonylation of MAPRE1/EB1, thereby ensuring accurate spindle positioning in mitosis. Catalyzes lactylation of NBN/NBS1 in response to DNA damage, thereby promoting DNA double-strand breaks (DSBs) via homologous recombination (HR). Its function is as follows. (Microbial infection) Catalyzes the acetylation of flavivirus NS3 protein to modulate their RNA-binding and -unwinding activities leading to facilitate viral replication. The polypeptide is Histone acetyltransferase KAT5 (Homo sapiens (Human)).